A 377-amino-acid chain; its full sequence is Chaperone protein DnaJ (377 aa).

Residues 5–70 (DCYEVLGISR…QKKAAYDQYG (66 aa)) form the J domain. A CR-type zinc finger spans residues 133 to 211 (GISKEIQIPT…CHGHGRYERS (79 aa)). Zn(2+) is bound by residues cysteine 146, cysteine 149, cysteine 163, cysteine 166, cysteine 185, cysteine 188, cysteine 199, and cysteine 202. CXXCXGXG motif repeat units follow at residues 146-153 (CEQCNGSG), 163-170 (CGTCYGQG), 185-192 (CPTCRGQG), and 199-206 (CHKCHGHG).

This sequence belongs to the DnaJ family. Homodimer. Requires Zn(2+) as cofactor.

It localises to the cytoplasm. Its function is as follows. Participates actively in the response to hyperosmotic and heat shock by preventing the aggregation of stress-denatured proteins and by disaggregating proteins, also in an autonomous, DnaK-independent fashion. Unfolded proteins bind initially to DnaJ; upon interaction with the DnaJ-bound protein, DnaK hydrolyzes its bound ATP, resulting in the formation of a stable complex. GrpE releases ADP from DnaK; ATP binding to DnaK triggers the release of the substrate protein, thus completing the reaction cycle. Several rounds of ATP-dependent interactions between DnaJ, DnaK and GrpE are required for fully efficient folding. Also involved, together with DnaK and GrpE, in the DNA replication of plasmids through activation of initiation proteins. The sequence is that of Chaperone protein DnaJ from Psychromonas ingrahamii (strain DSM 17664 / CCUG 51855 / 37).